We begin with the raw amino-acid sequence, 156 residues long: Arginine repressor (156 aa).

Belongs to the ArgR family.

It localises to the cytoplasm. The protein operates within amino-acid biosynthesis; L-arginine biosynthesis [regulation]. Functionally, regulates arginine biosynthesis genes. The polypeptide is Arginine repressor (Escherichia fergusonii (strain ATCC 35469 / DSM 13698 / CCUG 18766 / IAM 14443 / JCM 21226 / LMG 7866 / NBRC 102419 / NCTC 12128 / CDC 0568-73)).